The sequence spans 423 residues: Gamma-glutamyl phosphate reductase (423 aa).

It belongs to the gamma-glutamyl phosphate reductase family.

It localises to the cytoplasm. It carries out the reaction L-glutamate 5-semialdehyde + phosphate + NADP(+) = L-glutamyl 5-phosphate + NADPH + H(+). Its pathway is amino-acid biosynthesis; L-proline biosynthesis; L-glutamate 5-semialdehyde from L-glutamate: step 2/2. In terms of biological role, catalyzes the NADPH-dependent reduction of L-glutamate 5-phosphate into L-glutamate 5-semialdehyde and phosphate. The product spontaneously undergoes cyclization to form 1-pyrroline-5-carboxylate. This is Gamma-glutamyl phosphate reductase from Paracoccus denitrificans (strain Pd 1222).